Here is a 277-residue protein sequence, read N- to C-terminus: MEAAETEAEAAALEVLAEVAGILEPVGLQEEAELPAKILVEFVVDSQKKDKLLCSQLQVADFLQNILAQEDTAKGLDPLASEDTSRQKAIAAKEQWKELKATYREHVEAIKIGLTKALTQMEEAQRKRTQLREAFEQLQAKKQMAMEKRRAVQNQWQLQQEKHLQHLAEVSAEVRERKTGTQQELDRVFQKLGNLKQQAEQERDKLQRYQTFLQLLYTLQGKLLFPEAEAEAENLPDDKPQQPTRPQEQSTGDTMGRDPGVSFKAVGLQPAGDVNLP.

The interval 80–155 is interaction with NDC80 and ZW10; the sequence is ASEDTSRQKA…MEKRRAVQNQ (76 aa). A coiled-coil region spans residues 104–217; the sequence is REHVEAIKIG…RYQTFLQLLY (114 aa). The segment at 228–277 is disordered; it reads AEAEAENLPDDKPQQPTRPQEQSTGDTMGRDPGVSFKAVGLQPAGDVNLP. Positions 241 to 253 are enriched in polar residues; it reads QQPTRPQEQSTGD.

In terms of assembly, component of the KNL1 complex composed of KNL1 and ZWINT. Part of the ten-subunit outer kinetochore KMN network that includes the KNL1, MIS12 and NDC80 complexes; a bioriented kinetochore contains approximately 150 copies of the network. Interacts with the MIS12 complex subunits MIS12 DSN1, and PMF1. Interacts with the NDC80 complex subunit NDC80 during mitosis. Interacts with ZW10. Interacts with CETN3.

It is found in the nucleus. The protein localises to the chromosome. It localises to the centromere. Its subcellular location is the kinetochore. In terms of biological role, acts as a component of the outer kinetochore KNL1 complex that serves as a docking point for spindle assembly checkpoint components and mediates microtubule-kinetochore interactions. Kinetochores, consisting of a centromere-associated inner segment and a microtubule-contacting outer segment, play a crucial role in chromosome segregation by mediating the physical connection between centromeric DNA and spindle microtubules. The outer kinetochore is made up of the ten-subunit KMN network, comprising the MIS12, NDC80 and KNL1 complexes, and auxiliary microtubule-associated components; together they connect the outer kinetochore with the inner kinetochore, bind microtubules, and mediate interactions with mitotic checkpoint proteins that delay anaphase until chromosomes are bioriented on the spindle. Targets the RZZ complex to the kinetochore at prometaphase. Recruits MAD2L1 to the kinetochore, but is not required for BUB1B localization. In addition to orienting mitotic chromosomes, it is also essential for alignment of homologous chromosomes during meiotic metaphase I. In meiosis I, required to activate the spindle assembly checkpoint at unattached kinetochores to correct erroneous kinetochore-microtubule attachments. This Homo sapiens (Human) protein is Outer kinetochore KNL1 complex subunit ZWINT (ZWINT).